A 159-amino-acid polypeptide reads, in one-letter code: Ribosomal RNA large subunit methyltransferase H (159 aa).

S-adenosyl-L-methionine is bound by residues Leu76, Gly108, and 127–132 (FGLLTF).

It belongs to the RNA methyltransferase RlmH family. As to quaternary structure, homodimer.

It localises to the cytoplasm. It catalyses the reaction pseudouridine(1915) in 23S rRNA + S-adenosyl-L-methionine = N(3)-methylpseudouridine(1915) in 23S rRNA + S-adenosyl-L-homocysteine + H(+). In terms of biological role, specifically methylates the pseudouridine at position 1915 (m3Psi1915) in 23S rRNA. The chain is Ribosomal RNA large subunit methyltransferase H from Streptococcus thermophilus (strain ATCC BAA-491 / LMD-9).